We begin with the raw amino-acid sequence, 170 residues long: Small ribosomal subunit protein bS18c (170 aa).

2 disordered regions span residues 1–59 (MYIS…IGPG) and 151–170 (NLRNSNQNLRNNNRNLSSDC). Repeats lie at residues 4–10 (SKQPFRK), 11–17 (SKQPFRK), 18–24 (SKQTFHK), 25–31 (SKQPFRK), 32–38 (FKQPFRK), 39–45 (SKQPFRK), and 46–52 (SKQPFRR). Positions 4–52 (SKQPFRKSKQPFRKSKQTFHKSKQPFRKFKQPFRKSKQPFRKSKQPFRR) are 7 X 7 AA tandem repeats. Basic residues predominate over residues 7-55 (PFRKSKQPFRKSKQTFHKSKQPFRKFKQPFRKSKQPFRKSKQPFRRRSR).

The protein belongs to the bacterial ribosomal protein bS18 family. Part of the 30S ribosomal subunit.

It is found in the plastid. Its subcellular location is the chloroplast. The protein is Small ribosomal subunit protein bS18c (rps18) of Zea mays (Maize).